Consider the following 266-residue polypeptide: 3-methyl-2-oxobutanoate hydroxymethyltransferase (266 aa).

Positions 46 and 85 each coordinate Mg(2+). 3-methyl-2-oxobutanoate-binding positions include 46 to 47, Asp85, and Lys115; that span reads DS. Glu117 provides a ligand contact to Mg(2+). Glu183 serves as the catalytic Proton acceptor.

Belongs to the PanB family. In terms of assembly, homodecamer; pentamer of dimers. The cofactor is Mg(2+).

Its subcellular location is the cytoplasm. The catalysed reaction is 3-methyl-2-oxobutanoate + (6R)-5,10-methylene-5,6,7,8-tetrahydrofolate + H2O = 2-dehydropantoate + (6S)-5,6,7,8-tetrahydrofolate. It participates in cofactor biosynthesis; (R)-pantothenate biosynthesis; (R)-pantoate from 3-methyl-2-oxobutanoate: step 1/2. In terms of biological role, catalyzes the reversible reaction in which hydroxymethyl group from 5,10-methylenetetrahydrofolate is transferred onto alpha-ketoisovalerate to form ketopantoate. This Trichlorobacter lovleyi (strain ATCC BAA-1151 / DSM 17278 / SZ) (Geobacter lovleyi) protein is 3-methyl-2-oxobutanoate hydroxymethyltransferase.